The sequence spans 51 residues: uncharacterized protein (51 aa).

The segment at 1-24 is disordered; that stretch reads MGGRFSGRVGIEKGGHPPSAADHS.

This is an uncharacterized protein from Escherichia coli.